Reading from the N-terminus, the 214-residue chain is Alpha-S1-casein (214 aa).

A signal peptide spans 1 to 15 (MKLLILTCLVAVALA). Phosphoserine is present on residues S63, S79, S81, S82, S83, and S90. 2 repeats span residues 85-99 (EIVP…IQKE) and 125-140 (EIVP…SMKE).

It belongs to the alpha-casein family. In terms of tissue distribution, mammary gland specific. Secreted in milk.

The protein resides in the secreted. Important role in the capacity of milk to transport calcium phosphate. The chain is Alpha-S1-casein (CSN1S1) from Bubalus bubalis (Domestic water buffalo).